We begin with the raw amino-acid sequence, 186 residues long: ATP synthase subunit b' (186 aa).

The chain crosses the membrane as a helical span at residues Ile-39–Pro-59.

It belongs to the ATPase B chain family. As to quaternary structure, F-type ATPases have 2 components, F(1) - the catalytic core - and F(0) - the membrane proton channel. F(1) has five subunits: alpha(3), beta(3), gamma(1), delta(1), epsilon(1). F(0) has four main subunits: a(1), b(1), b'(1) and c(10-14). The alpha and beta chains form an alternating ring which encloses part of the gamma chain. F(1) is attached to F(0) by a central stalk formed by the gamma and epsilon chains, while a peripheral stalk is formed by the delta, b and b' chains.

Its subcellular location is the cellular chromatophore membrane. In terms of biological role, f(1)F(0) ATP synthase produces ATP from ADP in the presence of a proton or sodium gradient. F-type ATPases consist of two structural domains, F(1) containing the extramembraneous catalytic core and F(0) containing the membrane proton channel, linked together by a central stalk and a peripheral stalk. During catalysis, ATP synthesis in the catalytic domain of F(1) is coupled via a rotary mechanism of the central stalk subunits to proton translocation. Component of the F(0) channel, it forms part of the peripheral stalk, linking F(1) to F(0). The b'-subunit is a diverged and duplicated form of b found in plants and photosynthetic bacteria. The sequence is that of ATP synthase subunit b' from Rhodobacter capsulatus (Rhodopseudomonas capsulata).